Consider the following 225-residue polypeptide: PKHD-type hydroxylase Smlt1146 (225 aa).

The region spanning 78–177 (KYLPPRFNRY…RVASFFWVQS (100 aa)) is the Fe2OG dioxygenase domain. Fe cation contacts are provided by H96, D98, and H158. R168 provides a ligand contact to 2-oxoglutarate.

Fe(2+) is required as a cofactor. It depends on L-ascorbate as a cofactor.

This is PKHD-type hydroxylase Smlt1146 from Stenotrophomonas maltophilia (strain K279a).